An 824-amino-acid chain; its full sequence is Translation initiation factor IF-2 (824 aa).

Disordered regions lie at residues methionine 1–lysine 32 and valine 45–glutamine 232. The span at valine 45–lysine 57 shows a compositional bias: low complexity. Over residues lysine 86–alanine 144 the composition is skewed to basic and acidic residues. Over residues alanine 145–proline 167 the composition is skewed to low complexity. Positions alanine 170–arginine 193 are enriched in basic and acidic residues. The tr-type G domain maps to threonine 321–glutamate 489. The tract at residues glycine 330 to threonine 337 is G1. A GTP-binding site is contributed by glycine 330–threonine 337. Residues glycine 355–histidine 359 form a G2 region. Residues aspartate 377–glycine 380 are G3. Residues aspartate 377 to histidine 381 and asparagine 431 to aspartate 434 contribute to the GTP site. Residues asparagine 431 to aspartate 434 form a G4 region. The G5 stretch occupies residues serine 467–isoleucine 469.

Belongs to the TRAFAC class translation factor GTPase superfamily. Classic translation factor GTPase family. IF-2 subfamily.

It localises to the cytoplasm. Its function is as follows. One of the essential components for the initiation of protein synthesis. Protects formylmethionyl-tRNA from spontaneous hydrolysis and promotes its binding to the 30S ribosomal subunits. Also involved in the hydrolysis of GTP during the formation of the 70S ribosomal complex. This chain is Translation initiation factor IF-2, found in Roseobacter denitrificans (strain ATCC 33942 / OCh 114) (Erythrobacter sp. (strain OCh 114)).